Consider the following 263-residue polypeptide: N-acyl homoserine lactonase AttM (263 aa).

Zn(2+) is bound by residues H103, H105, D107, H108, H180, D202, and H247.

It belongs to the metallo-beta-lactamase superfamily. The cofactor is Zn(2+).

The enzyme catalyses an N-acyl-L-homoserine lactone + H2O = an N-acyl-L-homoserine + H(+). The protein is N-acyl homoserine lactonase AttM (attM) of Rhizobium radiobacter (Agrobacterium tumefaciens).